Here is an 883-residue protein sequence, read N- to C-terminus: Valine--tRNA ligase (883 aa).

Residues 46–56 (PNVTGKLHLGH) carry the 'HIGH' region motif. The 'KMSKS' region signature appears at 520–524 (KMSKS). Lysine 523 contacts ATP. A coiled-coil region spans residues 809 to 844 (LVDLLNVEEELARLEKELAKWQKELDMVGKKLSNER).

Belongs to the class-I aminoacyl-tRNA synthetase family. ValS type 1 subfamily. Monomer.

It localises to the cytoplasm. It carries out the reaction tRNA(Val) + L-valine + ATP = L-valyl-tRNA(Val) + AMP + diphosphate. In terms of biological role, catalyzes the attachment of valine to tRNA(Val). As ValRS can inadvertently accommodate and process structurally similar amino acids such as threonine, to avoid such errors, it has a 'posttransfer' editing activity that hydrolyzes mischarged Thr-tRNA(Val) in a tRNA-dependent manner. The polypeptide is Valine--tRNA ligase (Streptococcus pneumoniae (strain ATCC BAA-255 / R6)).